The chain runs to 100 residues: MNLTPREKDKLLISMAAIVARRRLERGVKLNYPEAIALISDFVVEGARDGRPVAELMEAGAHVISRDQVMEGIAEMIHDVQVEATFPDGTKLVTVHEPIR.

It belongs to the urease gamma subunit family. As to quaternary structure, heterotrimer of UreA (gamma), UreB (beta) and UreC (alpha) subunits. Three heterotrimers associate to form the active enzyme.

The protein resides in the cytoplasm. It catalyses the reaction urea + 2 H2O + H(+) = hydrogencarbonate + 2 NH4(+). It participates in nitrogen metabolism; urea degradation; CO(2) and NH(3) from urea (urease route): step 1/1. In Rhizobium etli (strain ATCC 51251 / DSM 11541 / JCM 21823 / NBRC 15573 / CFN 42), this protein is Urease subunit gamma.